Here is a 283-residue protein sequence, read N- to C-terminus: Thymidylate synthase (283 aa).

Arg22 contributes to the dUMP binding site. The Nucleophile role is filled by Cys160. DUMP contacts are provided by residues 180-183 (RSCD), Asn191, and 221-223 (HIY). Asp183 contributes to the (6R)-5,10-methylene-5,6,7,8-tetrahydrofolate binding site. Ser282 contributes to the (6R)-5,10-methylene-5,6,7,8-tetrahydrofolate binding site.

Belongs to the thymidylate synthase family. Bacterial-type ThyA subfamily. Homodimer.

The protein resides in the cytoplasm. The enzyme catalyses dUMP + (6R)-5,10-methylene-5,6,7,8-tetrahydrofolate = 7,8-dihydrofolate + dTMP. It participates in pyrimidine metabolism; dTTP biosynthesis. In terms of biological role, catalyzes the reductive methylation of 2'-deoxyuridine-5'-monophosphate (dUMP) to 2'-deoxythymidine-5'-monophosphate (dTMP) while utilizing 5,10-methylenetetrahydrofolate (mTHF) as the methyl donor and reductant in the reaction, yielding dihydrofolate (DHF) as a by-product. This enzymatic reaction provides an intracellular de novo source of dTMP, an essential precursor for DNA biosynthesis. The polypeptide is Thymidylate synthase (Haemophilus influenzae (strain ATCC 51907 / DSM 11121 / KW20 / Rd)).